The sequence spans 73 residues: Large ribosomal subunit protein bL31 (73 aa).

The protein belongs to the bacterial ribosomal protein bL31 family. Type A subfamily. As to quaternary structure, part of the 50S ribosomal subunit.

Its function is as follows. Binds the 23S rRNA. The chain is Large ribosomal subunit protein bL31 from Dinoroseobacter shibae (strain DSM 16493 / NCIMB 14021 / DFL 12).